Reading from the N-terminus, the 635-residue chain is 1-deoxy-D-xylulose-5-phosphate synthase (635 aa).

Thiamine diphosphate contacts are provided by residues H78 and 119-121 (GHS). A Mg(2+)-binding site is contributed by D151. Thiamine diphosphate is bound by residues 152–153 (GA), N180, Y289, and E371. N180 is a Mg(2+) binding site.

Belongs to the transketolase family. DXPS subfamily. As to quaternary structure, homodimer. Mg(2+) serves as cofactor. Thiamine diphosphate is required as a cofactor.

The enzyme catalyses D-glyceraldehyde 3-phosphate + pyruvate + H(+) = 1-deoxy-D-xylulose 5-phosphate + CO2. It functions in the pathway metabolic intermediate biosynthesis; 1-deoxy-D-xylulose 5-phosphate biosynthesis; 1-deoxy-D-xylulose 5-phosphate from D-glyceraldehyde 3-phosphate and pyruvate: step 1/1. Its function is as follows. Catalyzes the acyloin condensation reaction between C atoms 2 and 3 of pyruvate and glyceraldehyde 3-phosphate to yield 1-deoxy-D-xylulose-5-phosphate (DXP). This is 1-deoxy-D-xylulose-5-phosphate synthase from Bartonella tribocorum (strain CIP 105476 / IBS 506).